A 95-amino-acid chain; its full sequence is Cell division topological specificity factor (95 aa).

The protein belongs to the MinE family.

Prevents the cell division inhibition by proteins MinC and MinD at internal division sites while permitting inhibition at polar sites. This ensures cell division at the proper site by restricting the formation of a division septum at the midpoint of the long axis of the cell. This is Cell division topological specificity factor from Psychrobacter cryohalolentis (strain ATCC BAA-1226 / DSM 17306 / VKM B-2378 / K5).